Here is a 188-residue protein sequence, read N- to C-terminus: Large ribosomal subunit protein bL32m (188 aa).

Zn(2+) is bound by residues cysteine 110, cysteine 113, cysteine 123, and cysteine 126. The disordered stretch occupies residues 164–188 (TPSEQDQGKRIIERDRKRPSWFTQN). Residues 169–181 (DQGKRIIERDRKR) are compositionally biased toward basic and acidic residues.

This sequence belongs to the bacterial ribosomal protein bL32 family. Component of the mitochondrial large ribosomal subunit (mt-LSU). Mature mammalian 55S mitochondrial ribosomes consist of a small (28S) and a large (39S) subunit. The 28S small subunit contains a 12S ribosomal RNA (12S mt-rRNA) and 30 different proteins. The 39S large subunit contains a 16S rRNA (16S mt-rRNA), a copy of mitochondrial valine transfer RNA (mt-tRNA(Val)), which plays an integral structural role, and 52 different proteins. bL32m has a zinc binding site. Post-translationally, MRPL32 precursor is processed by the m-AAA protease (composed of AFG3L2 and SPG7), which cleaves the N-terminal transit peptide. Cleavage by the m-AAA protease takes place prior to assembly into the large subunit, an essential step for mitochondrial ribosome (mitoribosome) assembly. Proper processing by the m-AAA protease is dependent on the zinc-binding region within the tightly folded C-terminal domain of MRPL32: zinc-dependent folding halts degradation initiated from the N-terminus and triggers the release of mature MRPL32.

The protein localises to the mitochondrion. Component of the mitochondrial large ribosomal subunit (mt-LSU). The mitochondrial ribosome (mitoribosome) is a large ribonucleoprotein complex responsible for the synthesis of proteins inside mitochondria. The polypeptide is Large ribosomal subunit protein bL32m (MRPL32) (Homo sapiens (Human)).